Here is a 154-residue protein sequence, read N- to C-terminus: Mitochondrial fission 1 protein (154 aa).

Over 1 to 124 (MEDLLNEVVP…KEIDKEVAKG (124 aa)) the chain is Cytoplasmic. The chain crosses the membrane as a helical span at residues 125 to 145 (MVVAGGAALVLGGILGLGIAM). The Mitochondrial intermembrane segment spans residues 146 to 154 (ARNKQKREK).

Belongs to the FIS1 family.

It is found in the mitochondrion outer membrane. In terms of biological role, involved in the fragmentation of the mitochondrial network and its perinuclear clustering. Functions downstream of Pink1 and upstream of Drp1 to regulate mitochondrial fission. The protein is Mitochondrial fission 1 protein of Drosophila melanogaster (Fruit fly).